The following is a 221-amino-acid chain: MLSRAGKVVCIGRNYAAHIRELNNPFPTKPFFFLKPTSAIVEPGHGNLIIPPDVSAHYEVELGLIMKDRLPARRPVSSNSWLDSIGAYFVGIDMTARNIQNEAKKKGLPWSFAKGYDTFLPVGPIIPKHLIPDPHNVILELSLNGKVVQKDSTSLMLNKIPKIFSSITEAMSLNPGDLVLTGTPKGVGPVVPGDILSARLLTAQEQEIIPSKFEIKAEKCD.

Residues E59, E61, and D93 each contribute to the Mg(2+) site.

The protein belongs to the FAH family. Requires Mg(2+) as cofactor. Mn(2+) serves as cofactor.

It is found in the mitochondrion. The protein resides in the cytoplasm. The catalysed reaction is oxaloacetate = enol-oxaloacetate. Its function is as follows. Tautomerase that converts enol-oxaloacetate, a strong inhibitor of succinate dehydrogenase, to the physiological keto form of oxaloacetate. This Schizosaccharomyces pombe (strain 972 / ATCC 24843) (Fission yeast) protein is Oxaloacetate tautomerase oaa1, mitochondrial.